A 250-amino-acid chain; its full sequence is Flavin-dependent thymidylate synthase (250 aa).

In terms of domain architecture, ThyX spans 7–233 (LRVQLIAKTD…PSIFGDFDIA (227 aa)). FAD is bound by residues Ser-71, 95–97 (RHR), and Gln-103. DUMP is bound by residues 92–95 (ELIR), 103–107 (QLSQR), and Arg-172. Positions 95-105 (RHRHFSYSQLS) match the ThyX motif motif. FAD-binding positions include 188–190 (NYR) and His-194. Arg-199 is a binding site for dUMP. Residue Arg-199 is the Involved in ionization of N3 of dUMP, leading to its activation of the active site.

It belongs to the thymidylate synthase ThyX family. Homotetramer. FAD serves as cofactor.

It catalyses the reaction dUMP + (6R)-5,10-methylene-5,6,7,8-tetrahydrofolate + NADPH + H(+) = dTMP + (6S)-5,6,7,8-tetrahydrofolate + NADP(+). It functions in the pathway pyrimidine metabolism; dTTP biosynthesis. Its function is as follows. Catalyzes the reductive methylation of 2'-deoxyuridine-5'-monophosphate (dUMP) to 2'-deoxythymidine-5'-monophosphate (dTMP) while utilizing 5,10-methylenetetrahydrofolate (mTHF) as the methyl donor, and NADPH and FADH(2) as the reductant. This chain is Flavin-dependent thymidylate synthase, found in Mycobacteroides abscessus (strain ATCC 19977 / DSM 44196 / CCUG 20993 / CIP 104536 / JCM 13569 / NCTC 13031 / TMC 1543 / L948) (Mycobacterium abscessus).